The chain runs to 294 residues: Putative immediate early glycoprotein (294 aa).

Residues 1-21 (MKKLTMESLLVYTFVMGVCFT) form the signal peptide. Residues 262–282 (LFFLAGGAFTMLLLLCCLSMI) traverse the membrane as a helical segment.

This sequence belongs to the herpesviridae immediate early glycoprotein family.

The protein localises to the host membrane. This chain is Putative immediate early glycoprotein (U18), found in Homo sapiens (Human).